The following is a 249-amino-acid chain: Leucyl/phenylalanyl-tRNA--protein transferase (249 aa).

Belongs to the L/F-transferase family.

It localises to the cytoplasm. It carries out the reaction N-terminal L-lysyl-[protein] + L-leucyl-tRNA(Leu) = N-terminal L-leucyl-L-lysyl-[protein] + tRNA(Leu) + H(+). It catalyses the reaction N-terminal L-arginyl-[protein] + L-leucyl-tRNA(Leu) = N-terminal L-leucyl-L-arginyl-[protein] + tRNA(Leu) + H(+). The catalysed reaction is L-phenylalanyl-tRNA(Phe) + an N-terminal L-alpha-aminoacyl-[protein] = an N-terminal L-phenylalanyl-L-alpha-aminoacyl-[protein] + tRNA(Phe). Functions in the N-end rule pathway of protein degradation where it conjugates Leu, Phe and, less efficiently, Met from aminoacyl-tRNAs to the N-termini of proteins containing an N-terminal arginine or lysine. This Cupriavidus metallidurans (strain ATCC 43123 / DSM 2839 / NBRC 102507 / CH34) (Ralstonia metallidurans) protein is Leucyl/phenylalanyl-tRNA--protein transferase.